Here is a 253-residue protein sequence, read N- to C-terminus: MSLVCSVIFIHHAFNANILDKDYAFSDGEILMVDNAVRTHFEPYERHFKEIGFNENTIKKYLQCTNIQTVTMPVPAKFLRASNVPTGLLNEMIAYLNSEERNHHNFSELLLFSCLSIFATCKGFITLLTNGVLSVSGKVRNIVNMKLAHPWKLKDICDCLYISESLLKKKLKQEQTTFSQILLDARMQHAKNLIRVEGSVNKIAEQCGYASTSYFIYAFRKHFGNSPKRVSKEYRCQRHTGMNTGNTMNALAI.

The 97-residue stretch at 137-233 folds into the HTH araC/xylS-type domain; it reads GKVRNIVNMK…GNSPKRVSKE (97 aa). 2 consecutive DNA-binding regions (H-T-H motif) follow at residues 154 to 175 and 200 to 223; these read KDIC…KQEQ and VNKI…RKHF.

Its function is as follows. Induces the expression of gadE and mdtEF. Could also regulate the expression of other genes involved in acid resistance. The protein is HTH-type transcriptional regulator YdeO of Escherichia coli O157:H7.